Reading from the N-terminus, the 188-residue chain is HTH-type transcriptional regulator Mb3439c (188 aa).

Residues Glu17–Leu77 form the HTH tetR-type domain. The segment at residues Ser40–Phe59 is a DNA-binding region (H-T-H motif).

In terms of biological role, negatively regulates the expression of sulfate ester dioxygenase Mb3440 and its own expression. This is HTH-type transcriptional regulator Mb3439c from Mycobacterium bovis (strain ATCC BAA-935 / AF2122/97).